The primary structure comprises 126 residues: Glycine cleavage system H protein (126 aa).

Residues 22–104 (VAIIGITEYA…YEKAWMVKVE (83 aa)) enclose the Lipoyl-binding domain. Position 63 is an N6-lipoyllysine (K63).

This sequence belongs to the GcvH family. In terms of assembly, the glycine cleavage system is composed of four proteins: P, T, L and H. (R)-lipoate serves as cofactor.

Its function is as follows. The glycine cleavage system catalyzes the degradation of glycine. The H protein shuttles the methylamine group of glycine from the P protein to the T protein. Is also involved in protein lipoylation via its role as an octanoyl/lipoyl carrier protein intermediate. In Staphylococcus aureus (strain USA300), this protein is Glycine cleavage system H protein.